Consider the following 98-residue polypeptide: Defensin-like protein 219 (98 aa).

Residues methionine 1–serine 16 form the signal peptide. 3 disulfide bridges follow: cysteine 68–cysteine 85, cysteine 71–cysteine 90, and cysteine 75–cysteine 92.

Belongs to the DEFL family.

It is found in the secreted. In Arabidopsis thaliana (Mouse-ear cress), this protein is Defensin-like protein 219.